The sequence spans 604 residues: Siderophore iron transporter mirB (604 aa).

Residues methionine 1–serine 61 are disordered. 14 helical membrane-spanning segments follow: residues alanine 73–leucine 95, phenylalanine 115–isoleucine 137, alanine 149–alanine 168, alanine 178–isoleucine 200, glycine 207–glycine 224, tryptophan 237–leucine 259, tyrosine 289–proline 311, tyrosine 326–leucine 343, threonine 363–phenylalanine 385, alanine 400–isoleucine 422, tyrosine 427–phenylalanine 449, glutamine 454–leucine 476, tyrosine 489–isoleucine 511, and alanine 566–valine 588.

This sequence belongs to the major facilitator superfamily.

Its subcellular location is the membrane. Its function is as follows. Involved in the transport of siderophore triacestylfusarinine C and so has a role in iron homeostasis. The protein is Siderophore iron transporter mirB (mirB) of Emericella nidulans (strain FGSC A4 / ATCC 38163 / CBS 112.46 / NRRL 194 / M139) (Aspergillus nidulans).